Here is a 153-residue protein sequence, read N- to C-terminus: MKKRQYLKSLYVALLGTLCYLSVNAQSQLFTPEQMSKIENKLIGEHKFALQWISWDKFGTAEISRDATGLVIKGEQELDGNSVSLFGRIKVIDESAFLFTGEIVTIVYHVNKGKACTRHGTYEFRATDKRKYWRLQQMDSPCDSVVDYIDIFF.

The first 25 residues, Met-1–Ala-25, serve as a signal peptide directing secretion.

This is an uncharacterized protein from Pasteurella multocida (strain Pm70).